Consider the following 157-residue polypeptide: Cytochrome c-type biogenesis protein CcmE (157 aa).

Residues 1-8 (MHPVRKQR) are Cytoplasmic-facing. The chain crosses the membrane as a helical; Signal-anchor for type II membrane protein span at residues 9–29 (LMTVLFIVIASSVAVGLMVFA). At 30–157 (LSKNLNLFYP…KTCEGLDYAS (128 aa)) the chain is on the periplasmic side. Positions 124 and 128 each coordinate heme.

Belongs to the CcmE/CycJ family.

Its subcellular location is the cell inner membrane. Its function is as follows. Heme chaperone required for the biogenesis of c-type cytochromes. Transiently binds heme delivered by CcmC and transfers the heme to apo-cytochromes in a process facilitated by CcmF and CcmH. This Saccharophagus degradans (strain 2-40 / ATCC 43961 / DSM 17024) protein is Cytochrome c-type biogenesis protein CcmE.